Consider the following 314-residue polypeptide: Serine/threonine-protein phosphatase PP2A-4 catalytic subunit (314 aa).

Asp62, His64, Asp90, and Asn122 together coordinate Mn(2+). Residue His123 is the Proton donor of the active site. Positions 172 and 246 each coordinate Mn(2+).

It belongs to the PPP phosphatase family. PP-2A subfamily. Mn(2+) is required as a cofactor.

The protein localises to the cytoplasm. It carries out the reaction O-phospho-L-seryl-[protein] + H2O = L-seryl-[protein] + phosphate. The enzyme catalyses O-phospho-L-threonyl-[protein] + H2O = L-threonyl-[protein] + phosphate. This is Serine/threonine-protein phosphatase PP2A-4 catalytic subunit (PP2A4) from Oryza sativa subsp. japonica (Rice).